The chain runs to 97 residues: Large ribosomal subunit protein bL28 (97 aa).

The protein belongs to the bacterial ribosomal protein bL28 family.

This chain is Large ribosomal subunit protein bL28, found in Rhizorhabdus wittichii (strain DSM 6014 / CCUG 31198 / JCM 15750 / NBRC 105917 / EY 4224 / RW1) (Sphingomonas wittichii).